Consider the following 180-residue polypeptide: Oligoribonuclease (180 aa).

Residues 7 to 170 (LIWIDLEMTG…DDIRDSINEL (164 aa)) enclose the Exonuclease domain. Residue Y128 is part of the active site.

The protein belongs to the oligoribonuclease family.

Its subcellular location is the cytoplasm. 3'-to-5' exoribonuclease specific for small oligoribonucleotides. The polypeptide is Oligoribonuclease (Marinobacter nauticus (strain ATCC 700491 / DSM 11845 / VT8) (Marinobacter aquaeolei)).